The primary structure comprises 240 residues: 2,3,4,5-tetrahydropyridine-2,6-dicarboxylate N-acetyltransferase (240 aa).

The protein belongs to the transferase hexapeptide repeat family. DapH subfamily.

It carries out the reaction (S)-2,3,4,5-tetrahydrodipicolinate + acetyl-CoA + H2O = L-2-acetamido-6-oxoheptanedioate + CoA. It functions in the pathway amino-acid biosynthesis; L-lysine biosynthesis via DAP pathway; LL-2,6-diaminopimelate from (S)-tetrahydrodipicolinate (acetylase route): step 1/3. Functionally, catalyzes the transfer of an acetyl group from acetyl-CoA to tetrahydrodipicolinate. This Halalkalibacterium halodurans (strain ATCC BAA-125 / DSM 18197 / FERM 7344 / JCM 9153 / C-125) (Bacillus halodurans) protein is 2,3,4,5-tetrahydropyridine-2,6-dicarboxylate N-acetyltransferase.